Consider the following 341-residue polypeptide: Heme A synthase (341 aa).

8 helical membrane passes run 8-28 (VIIW…VGGI), 92-112 (FHRF…VYFL), 126-146 (IVLL…VRSG), 160-180 (LHLT…LDLI), 201-221 (AALL…AGLI), 256-276 (VQFV…FLFF), 294-314 (LVVF…YSVP), and 315-335 (LALG…MTYT). His260 contacts heme. His321 is a binding site for heme.

The protein belongs to the COX15/CtaA family. Type 2 subfamily. Interacts with CtaB. Requires heme b as cofactor.

The protein resides in the cell membrane. It carries out the reaction Fe(II)-heme o + 2 A + H2O = Fe(II)-heme a + 2 AH2. It functions in the pathway porphyrin-containing compound metabolism; heme A biosynthesis; heme A from heme O: step 1/1. Functionally, catalyzes the conversion of heme O to heme A by two successive hydroxylations of the methyl group at C8. The first hydroxylation forms heme I, the second hydroxylation results in an unstable dihydroxymethyl group, which spontaneously dehydrates, resulting in the formyl group of heme A. The polypeptide is Heme A synthase (Flavobacterium johnsoniae (strain ATCC 17061 / DSM 2064 / JCM 8514 / BCRC 14874 / CCUG 350202 / NBRC 14942 / NCIMB 11054 / UW101) (Cytophaga johnsonae)).